The sequence spans 208 residues: Peptide deformylase 3 (208 aa).

Residues Cys-120 and His-162 each coordinate Fe cation. The active site involves Glu-163. His-166 provides a ligand contact to Fe cation.

The protein belongs to the polypeptide deformylase family. Requires Fe(2+) as cofactor.

The catalysed reaction is N-terminal N-formyl-L-methionyl-[peptide] + H2O = N-terminal L-methionyl-[peptide] + formate. Functionally, removes the formyl group from the N-terminal Met of newly synthesized proteins. Requires at least a dipeptide for an efficient rate of reaction. N-terminal L-methionine is a prerequisite for activity but the enzyme has broad specificity at other positions. The polypeptide is Peptide deformylase 3 (Streptomyces coelicolor (strain ATCC BAA-471 / A3(2) / M145)).